The following is a 706-amino-acid chain: Elongation factor G (706 aa).

The tr-type G domain occupies 8–295; sequence ERYRNFGIMA…AVIDYLPSPL (288 aa). Residues 17 to 24, 92 to 96, and 146 to 149 each bind GTP; these read AHIDAGKT, DTPGH, and NKMD.

This sequence belongs to the TRAFAC class translation factor GTPase superfamily. Classic translation factor GTPase family. EF-G/EF-2 subfamily.

The protein localises to the cytoplasm. In terms of biological role, catalyzes the GTP-dependent ribosomal translocation step during translation elongation. During this step, the ribosome changes from the pre-translocational (PRE) to the post-translocational (POST) state as the newly formed A-site-bound peptidyl-tRNA and P-site-bound deacylated tRNA move to the P and E sites, respectively. Catalyzes the coordinated movement of the two tRNA molecules, the mRNA and conformational changes in the ribosome. This Jannaschia sp. (strain CCS1) protein is Elongation factor G.